The sequence spans 140 residues: Odorant-binding protein 10 (140 aa).

The signal sequence occupies residues 1–25 (MTSFRLANLTVFLVLLFCFMRGVHS).

Belongs to the PBP/GOBP family. In terms of tissue distribution, high-level expression in female mouth parts, particularly in the proboscis (at protein level). Low-level expression in female antenna (at protein level). Female salivary gland. Female chemosensory organs: antenna, palp and proboscis. Male antenna, wing and maxillary palp. Expressed at higher levels in male tissues compared to female tissues. Not detected in midgut.

The protein resides in the secreted. Involved in modulation of blood-feeding behavior and capacity in female mosquitoes. Required for normal oviposition. Required for normal fecundity and fertility of female mosquitoes. Required for normal expression of VGA1 gene, which encodes the egg yolk protein vitellogenin-A1. Required for normal female longevity when mosquitoes are maintained on regular sugar meal. In terms of biological role, (Microbial infection) Facilitates shedding of dengue virus type 2 particles into mosquito saliva. Does not affect dengue virus type 2 replication or infection prevalence in midgut and salivary glands at 14 days after blood feeding. Its function is as follows. (Microbial infection) Facilitates shedding of Zika virus particles into mosquito saliva. Does not affect Zika virus replication or infection prevalence in midgut and salivary glands at 14 days after blood feeding. This Aedes aegypti (Yellowfever mosquito) protein is Odorant-binding protein 10.